A 226-amino-acid polypeptide reads, in one-letter code: Lipoprotein-releasing system ATP-binding protein LolD (226 aa).

Residues 6–226 enclose the ABC transporter domain; sequence LKLDNIRRAF…KMSEGLLVEV (221 aa). 42–49 is a binding site for ATP; the sequence is GPSGAGKS.

It belongs to the ABC transporter superfamily. Lipoprotein translocase (TC 3.A.1.125) family. In terms of assembly, the complex is composed of two ATP-binding proteins (LolD) and two transmembrane proteins (LolC and LolE).

It localises to the cell inner membrane. In terms of biological role, part of the ABC transporter complex LolCDE involved in the translocation of mature outer membrane-directed lipoproteins, from the inner membrane to the periplasmic chaperone, LolA. Responsible for the formation of the LolA-lipoprotein complex in an ATP-dependent manner. This Paramagnetospirillum magneticum (strain ATCC 700264 / AMB-1) (Magnetospirillum magneticum) protein is Lipoprotein-releasing system ATP-binding protein LolD.